The primary structure comprises 484 residues: Pheophytinase, chloroplastic (484 aa).

A chloroplast-targeting transit peptide spans 1–47 (MEIISLNVVPQCSVVTWSSKLATKRLVPNRSSLLFSGVKKSRLVIRS).

This sequence belongs to the AB hydrolase superfamily. As to quaternary structure, interacts with HCAR, RCCR, PAO and the LHCII complex. Part of a SGR1-CCE-LHCII complex, which acts in chlorophyll breakdown.

The protein resides in the plastid. Its subcellular location is the chloroplast thylakoid membrane. It localises to the chloroplast stroma. In terms of biological role, alpha/beta hydrolase dephytylating specifically the Mg-free chlorophyll pigment (pheophytin), yielding pheophorbide. No activity on chlorophyll. Belongs to the chlorophyll catabolic enzymes (CCEs). The polypeptide is Pheophytinase, chloroplastic (PPH) (Arabidopsis thaliana (Mouse-ear cress)).